The chain runs to 798 residues: Vacuolar protein sorting-associated protein 53 homolog (798 aa).

Belongs to the VPS53 family. Component of the Golgi-associated retrograde protein (GARP) complex, also called VFT (VPS fifty-three) complex, composed of vps-51, vps-52, vps-53 and vps-54. Within the complex interacts with vps-51, vps-52 and vps-54. Ubiquitously expressed, with particularly strong expression in neuronal cells. Specifically expressed in head and tail neurons and in the pharynx and ventral cord motor neurons.

It is found in the golgi apparatus. It localises to the trans-Golgi network membrane. The protein resides in the endosome membrane. The protein localises to the perikaryon. Its subcellular location is the cytoplasm. It is found in the perinuclear region. Its function is as follows. Acts as a component of the GARP complex that is involved in retrograde transport from early and late endosomes to the trans-Golgi network (TGN). The GARP complex facilitates tethering as well as SNARE complex assembly at the Golgi. Plays a role in the trafficking of cargo to dense-core vesicles, probably through association with the EARP-interacting protein eipr-1. Important for neuronal function. The protein is Vacuolar protein sorting-associated protein 53 homolog of Caenorhabditis elegans.